The chain runs to 726 residues: A-type inclusion protein A25 homolog (726 aa).

The tract at residues 342–361 is disordered; it reads TNTGIEEPHATGGDKEDQPI. The segment covering 347–360 has biased composition (basic and acidic residues); the sequence is EEPHATGGDKEDQP. The segment at 426-713 is 4 X approximate tandem repeats; the sequence is TELEEAKRKL…ERQLNDCRRN (288 aa). Repeat copies occupy residues 612 to 634, 639 to 661, 667 to 689, and 691 to 713.

Belongs to the poxviridae A25 protein family. Interacts (via N-terminus) with protein A26.

The protein localises to the virion. Its function is as follows. Structural protein that forms a matrix surrounding the mature virion (MV) through interaction with protein A26. Presence of protein A25 in the virion structurally prevents direct virus-cell fusion mechanism. The polypeptide is A-type inclusion protein A25 homolog (Camelus).